The following is a 101-amino-acid chain: Pore-forming peptide amoebapore C (101 aa).

An N-terminal signal peptide occupies residues 1 to 24 (MKLFVLLCVFVLCLASQEKQQDRE). The Saposin B-type domain occupies 25 to 101 (IPVLCPVCTS…KLICGLIHAC (77 aa)). 3 disulfides stabilise this stretch: cysteine 29–cysteine 101, cysteine 32–cysteine 95, and cysteine 59–cysteine 70.

As to quaternary structure, monomer. Homodimer. Hexamer; formed during insertion in the membrane.

The protein resides in the cytoplasmic granule. Functionally, forms pores in the cell membrane of host cells. Has antibacterial activity against M.luteus, no activity against E.coli. Implicated in the cytolytic activity of the parasite. The polypeptide is Pore-forming peptide amoebapore C (Entamoeba histolytica (strain ATCC 30459 / HM-1:IMSS / ABRM)).